We begin with the raw amino-acid sequence, 354 residues long: MTELKNDRYLRALLRQPVDVTPVWMMRQAGRYLPEYKATRAQAGDFMSLCKNAELACEVTLQPLRRYPLDAAILFSDILTIPDAMGLGLYFEAGEGPRFTSPIKSKADVDKLPIPDPEQELGYVMNAVRTIRRELKGEVPLIGFSGSPWTLATYMVEGGSSKAFTVIKKMMYAEPQALHALLEKLAKSVTLYLNAQIKAGAQSVMIFDTWGGVLTGRDYQQFSLYYMHKIVDGLLRENEGRRVPVTLFTKGGGQWLEAMAETGCDALGLDWTTDIADARRRVGHKVALQGNMDPSMLYAPAPRIEEEVATILAGFGQGEGHVFNLGHGIHQDVDPQHAGVFVEAVHRLSTPYHQ.

Substrate contacts are provided by residues 27–31 (RQAGR), Asp-77, Tyr-154, Thr-209, and His-327.

It belongs to the uroporphyrinogen decarboxylase family. In terms of assembly, homodimer.

The protein localises to the cytoplasm. The enzyme catalyses uroporphyrinogen III + 4 H(+) = coproporphyrinogen III + 4 CO2. The protein operates within porphyrin-containing compound metabolism; protoporphyrin-IX biosynthesis; coproporphyrinogen-III from 5-aminolevulinate: step 4/4. In terms of biological role, catalyzes the decarboxylation of four acetate groups of uroporphyrinogen-III to yield coproporphyrinogen-III. This is Uroporphyrinogen decarboxylase from Klebsiella pneumoniae (strain 342).